We begin with the raw amino-acid sequence, 320 residues long: Ferrochelatase (320 aa).

Fe cation-binding residues include His194 and Glu275.

The protein belongs to the ferrochelatase family. In terms of assembly, monomer.

The protein resides in the cytoplasm. It carries out the reaction heme b + 2 H(+) = protoporphyrin IX + Fe(2+). It participates in porphyrin-containing compound metabolism; protoheme biosynthesis; protoheme from protoporphyrin-IX: step 1/1. Catalyzes the ferrous insertion into protoporphyrin IX. The chain is Ferrochelatase from Escherichia coli O139:H28 (strain E24377A / ETEC).